A 503-amino-acid polypeptide reads, in one-letter code: MEEFQGYFELDRXRQHDFLYPLLFREYIYALAHDHGLNRSILFKNAGYDKKSSSIVVKRLITRMYQQNPLIFSANDSIQNPFFGHNKNLYSQIISEGFAVIVEIPFSLRLVSSLERKEIAKSHNLRSIHSIFPFLEDKFSHLDYVSDVLIPYHIHLEILVQTLRYWVKDASSLHLLRFFLHEYWNSLITPKKHIILFSKGNPRLFLFLYNSHICEYESIFLFLRNQSSHLRSTSSGIFFERIYFYVKIEHFAKVFFDNDFQCILWFFKDPFMHYVRYQGKSILASKDTPLLMNKWKYYLVTLWQYHFYAWFQPGRIDINQLCKYSLDFLGYRSSVRLNSSVVRSQMLENSFLINNAMKKFETIVPIIPLIGSLSKANFCNTLGHPISKPTRADSSDSDIIDRFLRICRNLSHYHSGSSKKKSLYRVKYILRLSCVKTLARKHKRTVRTFFKRLGSEFLEXFLTEEEVVLSLIFPRTYSTSRRLYRGQIWYLDITSINDLVNYE.

Belongs to the intron maturase 2 family. MatK subfamily.

It is found in the plastid. The protein resides in the chloroplast. Usually encoded in the trnK tRNA gene intron. Probably assists in splicing its own and other chloroplast group II introns. In Syzygium australe (Brush cherry), this protein is Maturase K.